A 446-amino-acid polypeptide reads, in one-letter code: Glucarate dehydratase-related protein (446 aa).

4 residues coordinate substrate: His31, Thr104, Tyr149, and Lys204. The active-site Proton acceptor is the Lys206. 3 residues coordinate Mg(2+): Asp234, Glu265, and Asn288. 234 to 236 (DPN) serves as a coordination point for substrate. Substrate contacts are provided by residues Asn288, 338-340 (HSN), His367, and Arg421. The Proton acceptor role is filled by His338.

The protein belongs to the mandelate racemase/muconate lactonizing enzyme family. GlucD subfamily. Requires a divalent metal cation as cofactor.

Functionally, does not seem to have an in-vivo activity on glucarate or idarate. Its real substrate is unknown. The protein is Glucarate dehydratase-related protein (gudX) of Escherichia coli (strain K12).